The chain runs to 102 residues: NADH-quinone oxidoreductase subunit K (102 aa).

Transmembrane regions (helical) follow at residues 5–25 (IAHY…GIFL), 31–51 (IVIL…FVAF), and 66–86 (FVLT…VVFF).

The protein belongs to the complex I subunit 4L family. As to quaternary structure, NDH-1 is composed of 14 different subunits. Subunits NuoA, H, J, K, L, M, N constitute the membrane sector of the complex.

The protein resides in the cell inner membrane. The enzyme catalyses a quinone + NADH + 5 H(+)(in) = a quinol + NAD(+) + 4 H(+)(out). Functionally, NDH-1 shuttles electrons from NADH, via FMN and iron-sulfur (Fe-S) centers, to quinones in the respiratory chain. The immediate electron acceptor for the enzyme in this species is believed to be ubiquinone. Couples the redox reaction to proton translocation (for every two electrons transferred, four hydrogen ions are translocated across the cytoplasmic membrane), and thus conserves the redox energy in a proton gradient. This Mesorhizobium japonicum (strain LMG 29417 / CECT 9101 / MAFF 303099) (Mesorhizobium loti (strain MAFF 303099)) protein is NADH-quinone oxidoreductase subunit K.